The following is a 330-amino-acid chain: tRNA pseudouridine synthase B (330 aa).

Residue D42 is the Nucleophile of the active site.

This sequence belongs to the pseudouridine synthase TruB family. Type 1 subfamily.

The enzyme catalyses uridine(55) in tRNA = pseudouridine(55) in tRNA. Its function is as follows. Responsible for synthesis of pseudouridine from uracil-55 in the psi GC loop of transfer RNAs. This chain is tRNA pseudouridine synthase B, found in Lactococcus lactis subsp. cremoris (strain SK11).